Here is a 74-residue protein sequence, read N- to C-terminus: Porwaprin-a (74 aa).

An N-terminal signal peptide occupies residues 1–24; it reads MSSGGLLLLLGLLTLWEVLTPVSS. The 45-residue stretch at 27 to 71 folds into the WAP domain; sequence RPKKLGLCPPRPQKPCVKECKNDWSCPGQQKCCNYGCIDECRDPI. Disulfide bonds link Cys34–Cys59, Cys42–Cys63, Cys46–Cys58, and Cys52–Cys67.

Belongs to the venom waprin family. As to expression, expressed by the venom gland.

The protein localises to the secreted. Functionally, damages membranes of susceptible bacteria. Has no hemolytic activity. Not toxic to mice. Does not inhibit the proteinases elastase and cathepsin G. The polypeptide is Porwaprin-a (Pseudechis porphyriacus (Red-bellied black snake)).